The chain runs to 379 residues: Odorant receptor 23a (379 aa).

At 1 to 36 (MKLSETLKIDYFRVQLNAWRICGALDLSEGRYWSWS) the chain is on the cytoplasmic side. The chain crosses the membrane as a helical span at residues 37 to 57 (MLLCILVYLPTPMLLRGVYSF). Over 58–64 (EDPVENN) the chain is Extracellular. Asparagine 64 carries an N-linked (GlcNAc...) asparagine glycan. The chain crosses the membrane as a helical span at residues 65 to 85 (FSLSLTVTSLSNLMKFCMYVA). Residues 86–125 (QLTKMVEVQSLIGQLDARVSGESQSERHRNMTEHLLRMSK) are Cytoplasmic-facing. Residues 126–146 (LFQITYAVVFIIAAVPFVFET) traverse the membrane as a helical segment. Over 147–162 (ELSLPMPMWFPFDWKN) the chain is Extracellular. The chain crosses the membrane as a helical span at residues 163–183 (SMVAYIGALVFQEIGYVFQIM). The Cytoplasmic portion of the chain corresponds to 184–253 (QCFAADSFPP…TKSLVSYPMM (70 aa)). A helical transmembrane segment spans residues 254–274 (VQFMVIGINIAITLFVLIFYV). Residues 275–280 (ETLYDR) lie on the Extracellular side of the membrane. Residues 281-301 (IYYLCFLLGITVQTYPLCYYG) traverse the membrane as a helical segment. At 302-340 (TMVQESFAELHYAVFCSNWVDQSASYRGHMLILAERTKR) the chain is on the cytoplasmic side. A helical transmembrane segment spans residues 341–361 (MQLLLAGNLVPIHLSTYVACW). Over 362–379 (KGAYSFFTLMADRDGLGS) the chain is Extracellular.

This sequence belongs to the insect chemoreceptor superfamily. Heteromeric odorant receptor channel (TC 1.A.69) family. Or2a subfamily. As to quaternary structure, interacts with Orco. Complexes exist early in the endomembrane system in olfactory sensory neurons (OSNs), coupling these complexes to the conserved ciliary trafficking pathway. Expressed in 10-40 sensory cells in the third antenna segment and in the maxillary palp.

It localises to the cell membrane. In terms of biological role, odorant receptor which mediates acceptance or avoidance behavior, depending on its substrates. The odorant receptor repertoire encodes a large collection of odor stimuli that vary widely in identity, intensity, and duration. May form a complex with Orco to form odorant-sensing units, providing sensitive and prolonged odorant signaling and calcium permeability. The polypeptide is Odorant receptor 23a (Or23a) (Drosophila melanogaster (Fruit fly)).